Here is a 205-residue protein sequence, read N- to C-terminus: Guanylate kinase (205 aa).

The Guanylate kinase-like domain occupies 7–185; it reads GNIFIISAAS…AEGDLLHIVN (179 aa). An ATP-binding site is contributed by 14–21; that stretch reads AASGTGKT.

It belongs to the guanylate kinase family.

The protein localises to the cytoplasm. The catalysed reaction is GMP + ATP = GDP + ADP. Functionally, essential for recycling GMP and indirectly, cGMP. The polypeptide is Guanylate kinase (Neisseria gonorrhoeae (strain ATCC 700825 / FA 1090)).